Reading from the N-terminus, the 510-residue chain is Flavonoid 3',5'-hydroxylase (510 aa).

Residue Cys-447 coordinates heme.

It belongs to the cytochrome P450 family. The cofactor is heme.

It carries out the reaction a 3',5'-unsubstituted flavanone + 2 reduced [NADPH--hemoprotein reductase] + 2 O2 = a 3',5'-dihydroxyflavanone + 2 oxidized [NADPH--hemoprotein reductase] + 2 H2O + 2 H(+). Its pathway is pigment biosynthesis; anthocyanin biosynthesis. Functionally, catalyzes the 3'5'-hydroxylation of naringenin and eriodictyol to form 5,7,3,'4',5'-pentahydroxyflavanone and 3',5'-hydroxylation of dihydrokaempferol and dihydroquercetin to form dihydromyricetin. The chain is Flavonoid 3',5'-hydroxylase (CYP75A5) from Eustoma exaltatum subsp. russellianum (Bluebells).